We begin with the raw amino-acid sequence, 429 residues long: Phosphomethylpyrimidine synthase (429 aa).

Residues asparagine 66, methionine 95, tyrosine 124, histidine 163, serine 185–glycine 187, aspartate 226–arginine 229, and glutamate 265 contribute to the substrate site. Zn(2+) is bound at residue histidine 269. Substrate is bound at residue tyrosine 292. Histidine 333 contacts Zn(2+). 3 residues coordinate [4Fe-4S] cluster: cysteine 407, cysteine 410, and cysteine 414.

This sequence belongs to the ThiC family. Requires [4Fe-4S] cluster as cofactor.

The catalysed reaction is 5-amino-1-(5-phospho-beta-D-ribosyl)imidazole + S-adenosyl-L-methionine = 4-amino-2-methyl-5-(phosphooxymethyl)pyrimidine + CO + 5'-deoxyadenosine + formate + L-methionine + 3 H(+). The protein operates within cofactor biosynthesis; thiamine diphosphate biosynthesis. In terms of biological role, catalyzes the synthesis of the hydroxymethylpyrimidine phosphate (HMP-P) moiety of thiamine from aminoimidazole ribotide (AIR) in a radical S-adenosyl-L-methionine (SAM)-dependent reaction. This Pyrococcus furiosus (strain ATCC 43587 / DSM 3638 / JCM 8422 / Vc1) protein is Phosphomethylpyrimidine synthase.